A 1505-amino-acid chain; its full sequence is G patch domain-containing protein 8 (1505 aa).

The region spanning 40–86 is the G-patch domain; that stretch reads SDNIGHRLLQKHGWKLGQGLGKSLQGRTDPIPIVVKYDVMGMGRMEM. Residues 89–124 adopt a coiled-coil conformation; sequence DYAEDATERRRVLEVEKEDTEELRQKYKDYVDKEKA. The C2H2-type zinc-finger motif lies at 136–160; sequence FYCELCDKQYQKHQEFDNHINSYDH. Basic and acidic residues-rich tracts occupy residues 166–175 and 182–206; these read LKDLKQREFA and SRKD…RKQA. The segment at 166-244 is disordered; it reads LKDLKQREFA…SSTNSGASAV (79 aa). The span at 223-233 shows a compositional bias: acidic residues; the sequence is VDEDGGEEDKD. A Glycyl lysine isopeptide (Lys-Gly) (interchain with G-Cter in SUMO2) cross-link involves residue lysine 311. Composition is skewed to basic and acidic residues over residues 322–339 and 421–436; these read HAEE…EKSS and EGDH…ENRK. 2 disordered regions span residues 322–393 and 419–537; these read HAEE…EPEY and QMEG…FPVL. A compositionally biased stretch (polar residues) spans 437 to 449; sequence SSSPKPQGCSKTA. Position 479 is an N6-acetyllysine (lysine 479). Residue lysine 573 forms a Glycyl lysine isopeptide (Lys-Gly) (interchain with G-Cter in SUMO2) linkage. 2 stretches are compositionally biased toward basic and acidic residues: residues 575–612 and 648–665; these read SRNK…KSQE and SETE…EPSG. The tract at residues 575 to 1304 is disordered; the sequence is SRNKDAKAKG…ESTDGTEDAS (730 aa). At serine 648 the chain carries Phosphoserine. Basic residues predominate over residues 666–687; sequence KSHRHKKKKKHKKSSKHKRKHK. A compositionally biased stretch (basic and acidic residues) spans 688–702; sequence ADTEEKSSKAESGEK. Positions 703-715 are enriched in basic residues; the sequence is SKKRKKRKRKKNK. 3 positions are modified to phosphoserine: serine 733, serine 735, and serine 753. The segment covering 745–767 has biased composition (basic and acidic residues); the sequence is AQDDSQRRSLPAEEGNSGKKDDG. The span at 794-804 shows a compositional bias: basic residues; sequence ANTKHSSRSSH. The segment covering 832–849 has biased composition (acidic residues); sequence SEEEEEEEEEEEEEDEDS. The segment covering 856 to 871 has biased composition (basic residues); that stretch reads SRSRSGHRHSSHRSSR. Low complexity predominate over residues 872–900; sequence RSYSSSSDASSDQSCYSRQHSYSDDSYSD. 2 positions are modified to phosphoserine: serine 915 and serine 918. The segment covering 923–932 has biased composition (basic residues); sequence SKHRSKRHKY. A phosphoserine mark is found at serine 985, serine 1013, serine 1018, serine 1037, and serine 1039. Positions 1017–1031 are enriched in basic and acidic residues; it reads ESPEERRSGRRDFIR. A compositionally biased stretch (basic and acidic residues) spans 1050–1063; it reads GPGKKEDGRGDDSK. At serine 1085 the chain carries Phosphoserine. 3 stretches are compositionally biased toward basic and acidic residues: residues 1097–1112, 1163–1185, and 1211–1220; these read LLEK…KPNV, KKCE…EEGS, and EEPKSEEATA. A Glycyl lysine isopeptide (Lys-Gly) (interchain with G-Cter in SUMO2) cross-link involves residue lysine 1109. Serine 1179 is subject to Phosphoserine.

This Mus musculus (Mouse) protein is G patch domain-containing protein 8 (Gpatch8).